The primary structure comprises 430 residues: Adenylosuccinate synthetase (430 aa).

GTP contacts are provided by residues 12 to 18 (GDEGKGK) and 40 to 42 (GHT). Residue Asp13 is the Proton acceptor of the active site. Residues Asp13 and Gly40 each coordinate Mg(2+). IMP contacts are provided by residues 13–16 (DEGK), 38–41 (NAGH), Thr130, Arg144, Gln224, Thr239, and Arg303. Residue His41 is the Proton donor of the active site. 299 to 305 (TVTGRKR) is a binding site for substrate. Residues Arg305, 331–333 (KLD), and 413–415 (STS) each bind GTP.

Belongs to the adenylosuccinate synthetase family. Homodimer. Requires Mg(2+) as cofactor.

Its subcellular location is the cytoplasm. It carries out the reaction IMP + L-aspartate + GTP = N(6)-(1,2-dicarboxyethyl)-AMP + GDP + phosphate + 2 H(+). Its pathway is purine metabolism; AMP biosynthesis via de novo pathway; AMP from IMP: step 1/2. In terms of biological role, plays an important role in the de novo pathway of purine nucleotide biosynthesis. Catalyzes the first committed step in the biosynthesis of AMP from IMP. The protein is Adenylosuccinate synthetase of Cereibacter sphaeroides (strain ATCC 17023 / DSM 158 / JCM 6121 / CCUG 31486 / LMG 2827 / NBRC 12203 / NCIMB 8253 / ATH 2.4.1.) (Rhodobacter sphaeroides).